The sequence spans 1032 residues: Vacuolar membrane protease (1032 aa).

Over 1 to 11 (MRFQNPFAFRP) the chain is Cytoplasmic. A helical transmembrane segment spans residues 12–32 (GPVSFWTTVIYLALVIPLIYV). Residues 33–426 (HETVPPAPSD…AWAVFALRGL (394 aa)) lie on the Vacuolar side of the membrane. Asparagine 50 and asparagine 142 each carry an N-linked (GlcNAc...) asparagine glycan. Positions 207 and 219 each coordinate Zn(2+). Glutamate 253 serves as the catalytic Proton acceptor. The Zn(2+) site is built by glutamate 254, glutamate 279, and histidine 352. A helical membrane pass occupies residues 427–447 (FAWSLTLLVATPLILVAITYI). At 448 to 482 (LARKDKYYFFSRDIKMHHDINDDPVVLGGWKGFLR) the chain is on the cytoplasmic side. Residues 483–503 (FPFALVFAGALTIASTLLLAK) form a helical membrane-spanning segment. The Vacuolar segment spans residues 504-511 (FNPLIIYS). The helical transmembrane segment at 512–532 (SPYAVWSMTLSIFYFSFWLIM) threads the bilayer. The Cytoplasmic portion of the chain corresponds to 533 to 545 (RGASFIRPSALHR). Residues 546–566 (GYVLIWLFALGWGLQVVGAVA) traverse the membrane as a helical segment. Residues 567 to 573 (EDRLHIA) lie on the Vacuolar side of the membrane. The helical transmembrane segment at 574–594 (ALYATVFLQSAVFLALFISLL) threads the bilayer. Residues 595–708 (EQFALLGKHD…WSGRLPSWTW (114 aa)) lie on the Cytoplasmic side of the membrane. The span at 616-631 (RDISSHGTDHESRPQP) shows a compositional bias: basic and acidic residues. The disordered stretch occupies residues 616–666 (RDISSHGTDHESRPQPEEEPAQPEGDEDESEDATETTPLRANEPGYGSSTR). Residues 632-649 (EEEPAQPEGDEDESEDAT) show a composition bias toward acidic residues. Residues 709 to 729 (IIQFLLLAPVPVILFGNLGLV) traverse the membrane as a helical segment. The Vacuolar segment spans residues 730-745 (AMSALQMTGTDGGSLL). A helical membrane pass occupies residues 746 to 766 (VPVLTLGIVSIFLLLPLTPFI). The Cytoplasmic segment spans residues 767-773 (HRVSHHV). The helical transmembrane segment at 774–794 (PMFLLCVFAGTFIYNLVAFPF) threads the bilayer. The Vacuolar portion of the chain corresponds to 795–1032 (SDSHRFKFYF…LVEVRKTYKV (238 aa)). N-linked (GlcNAc...) asparagine glycosylation is found at asparagine 812 and asparagine 884.

Belongs to the peptidase M28 family. Zn(2+) serves as cofactor.

It localises to the vacuole membrane. Functionally, may be involved in vacuolar sorting and osmoregulation. This chain is Vacuolar membrane protease, found in Fusarium vanettenii (strain ATCC MYA-4622 / CBS 123669 / FGSC 9596 / NRRL 45880 / 77-13-4) (Fusarium solani subsp. pisi).